Here is a 354-residue protein sequence, read N- to C-terminus: Protein OVEREXPRESSOR OF CATIONIC PEROXIDASE 3 (354 aa).

The Nuclear localization signal 1 motif lies at 63–70; that stretch reads NRKGFVSS. 2 disordered regions span residues 65-98 and 151-186; these read KGFV…EDPF and TGDV…PTKL. Acidic residues predominate over residues 154–181; that stretch reads VDVDVDNDDDDNDDDDNDDDDDDSEEDE. The short motif at 191–198 is the Nuclear localization signal 2 element; the sequence is LKRLAYAL. The disordered stretch occupies residues 243–264; the sequence is KPPVAAPENSSPDPSPVESLSA. Positions 286–345 form a DNA-binding region, homeobox; that stretch reads RWSAQKRVKKAHIETLEKVYRRSKRPTNAVVSSIVQVTNLPRKRVLKWFEDKRAEDGVPD. The short motif at 293–300 is the Nuclear localization signal 3 element; sequence VKKAHIET.

The protein localises to the nucleus. In terms of biological role, may modulate chromatin structure by regulation of nucleosome assembly/disassembly. Homeodomain transcription factor that mediates jasmonic acid (JA)-mediated COI1-dependent and abscisic acid (ABA)-mediated PMR4-dependent resistance to infection by necrotrophic fungal pathogens (e.g. B.cinerea and P.cucumerina) and bacterial pathogens (e.g. P.syringae DC3000); this resistance involves at least callose deposition. Required for the P.fluorescens WCS417r-triggered JA-dependent induced systemic resistance (ISR) against both P.syringae DC3000 and H.arabidopsidis. Negative regulator of the ABA-dependent drought resistance. The sequence is that of Protein OVEREXPRESSOR OF CATIONIC PEROXIDASE 3 from Arabidopsis thaliana (Mouse-ear cress).